Reading from the N-terminus, the 279-residue chain is 1-(5-phosphoribosyl)-5-[(5-phosphoribosylamino)methylideneamino] imidazole-4-carboxamide isomerase (279 aa).

This sequence belongs to the HisA/HisF family.

The protein resides in the cytoplasm. It catalyses the reaction 1-(5-phospho-beta-D-ribosyl)-5-[(5-phospho-beta-D-ribosylamino)methylideneamino]imidazole-4-carboxamide = 5-[(5-phospho-1-deoxy-D-ribulos-1-ylimino)methylamino]-1-(5-phospho-beta-D-ribosyl)imidazole-4-carboxamide. It participates in amino-acid biosynthesis; L-histidine biosynthesis; L-histidine from 5-phospho-alpha-D-ribose 1-diphosphate: step 4/9. This is 1-(5-phosphoribosyl)-5-[(5-phosphoribosylamino)methylideneamino] imidazole-4-carboxamide isomerase (HIS6) from Candida albicans (Yeast).